The following is a 225-amino-acid chain: Ribonuclease 3 (225 aa).

The RNase III domain maps to 4–133; that stretch reads FEKLEKLLGY…LIAAIYLDSN (130 aa). Glu-46 contributes to the Mg(2+) binding site. Asp-50 is an active-site residue. Mg(2+) contacts are provided by Asn-119 and Glu-122. Glu-122 is an active-site residue. One can recognise a DRBM domain in the interval 158 to 225; sequence DPKTALQEWA…AARKLLHKLK (68 aa).

This sequence belongs to the ribonuclease III family. As to quaternary structure, homodimer. Mg(2+) serves as cofactor.

The protein localises to the cytoplasm. It catalyses the reaction Endonucleolytic cleavage to 5'-phosphomonoester.. Digests double-stranded RNA. Involved in the processing of primary rRNA transcript to yield the immediate precursors to the large and small rRNAs (23S and 16S). Processes some mRNAs, and tRNAs when they are encoded in the rRNA operon. Processes pre-crRNA and tracrRNA of type II CRISPR loci if present in the organism. This chain is Ribonuclease 3, found in Rickettsia felis (strain ATCC VR-1525 / URRWXCal2) (Rickettsia azadi).